The following is a 469-amino-acid chain: tRNA(Ile)-lysidine synthase (469 aa).

26–31 lines the ATP pocket; it reads SGGPDS.

The protein belongs to the tRNA(Ile)-lysidine synthase family.

The protein resides in the cytoplasm. It carries out the reaction cytidine(34) in tRNA(Ile2) + L-lysine + ATP = lysidine(34) in tRNA(Ile2) + AMP + diphosphate + H(+). Ligates lysine onto the cytidine present at position 34 of the AUA codon-specific tRNA(Ile) that contains the anticodon CAU, in an ATP-dependent manner. Cytidine is converted to lysidine, thus changing the amino acid specificity of the tRNA from methionine to isoleucine. The polypeptide is tRNA(Ile)-lysidine synthase (Shouchella clausii (strain KSM-K16) (Alkalihalobacillus clausii)).